A 295-amino-acid chain; its full sequence is Diaminopimelate epimerase (295 aa).

Substrate is bound by residues asparagine 11 and asparagine 78. The active-site Proton donor is the cysteine 87. Substrate contacts are provided by residues 88-89 (GN), asparagine 163, asparagine 199, and 220-221 (ER). The active-site Proton acceptor is cysteine 229. 230 to 231 (GT) lines the substrate pocket.

Belongs to the diaminopimelate epimerase family. Homodimer.

The protein localises to the cytoplasm. The catalysed reaction is (2S,6S)-2,6-diaminopimelate = meso-2,6-diaminopimelate. Its pathway is amino-acid biosynthesis; L-lysine biosynthesis via DAP pathway; DL-2,6-diaminopimelate from LL-2,6-diaminopimelate: step 1/1. Its function is as follows. Catalyzes the stereoinversion of LL-2,6-diaminopimelate (L,L-DAP) to meso-diaminopimelate (meso-DAP), a precursor of L-lysine and an essential component of the bacterial peptidoglycan. In Mycobacteroides abscessus (strain ATCC 19977 / DSM 44196 / CCUG 20993 / CIP 104536 / JCM 13569 / NCTC 13031 / TMC 1543 / L948) (Mycobacterium abscessus), this protein is Diaminopimelate epimerase.